A 127-amino-acid polypeptide reads, in one-letter code: Glycine cleavage system H protein 2 (127 aa).

In terms of domain architecture, Lipoyl-binding spans 24–105 (SVTVGISDHA…PYGSWIFKLK (82 aa)). K65 is modified (N6-lipoyllysine).

The protein belongs to the GcvH family. The glycine cleavage system is composed of four proteins: P, T, L and H. It depends on (R)-lipoate as a cofactor.

Functionally, the glycine cleavage system catalyzes the degradation of glycine. The H protein shuttles the methylamine group of glycine from the P protein to the T protein. The polypeptide is Glycine cleavage system H protein 2 (Pseudomonas putida (strain ATCC 47054 / DSM 6125 / CFBP 8728 / NCIMB 11950 / KT2440)).